We begin with the raw amino-acid sequence, 871 residues long: Zinc finger and BTB domain-containing protein 10 (871 aa).

Disordered stretches follow at residues 1-156 and 177-228; these read MSFS…FNGR and GASL…AGEG. Positions 14–26 are enriched in gly residues; it reads RGGGLVTASGGGS. Over residues 27–37 the composition is skewed to low complexity; the sequence is TNNNAGGEASA. The span at 39 to 56 shows a compositional bias: pro residues; it reads PPQPQPRQPPPPAPPALQ. The span at 65 to 76 shows a compositional bias: acidic residues; the sequence is EEVELEGLEPQD. Residues 77–103 show a composition bias toward low complexity; sequence LEASAGPAAGAAEEAKELLLPQDAGGP. Omega-N-methylarginine is present on R126. Over residues 126 to 135 the composition is skewed to gly residues; it reads RGGGGGGLGN. S210 is subject to Phosphoserine. A Glycyl lysine isopeptide (Lys-Gly) (interchain with G-Cter in SUMO2) cross-link involves residue K245. The 70-residue stretch at 364-433 folds into the BTB domain; it reads CDVSIVVSGK…LYSGNLVLTS (70 aa). Residues K468, K483, and K497 each participate in a glycyl lysine isopeptide (Lys-Gly) (interchain with G-Cter in SUMO2) cross-link. S565 carries the phosphoserine modification. Glycyl lysine isopeptide (Lys-Gly) (interchain with G-Cter in SUMO2) cross-links involve residues K573, K672, K684, K696, and K706. 2 C2H2-type zinc fingers span residues 722–744 and 750–772; these read LKCP…LLIH and FSCD…SLVH. The segment at 812-871 is disordered; the sequence is SQPGGQEGVDQGQDTEFPRDEEYEENEVGEADEELVDDGEDQNDPSRWDESGEVCMSLDD. A compositionally biased stretch (acidic residues) spans 830–854; the sequence is RDEEYEENEVGEADEELVDDGEDQN.

The protein resides in the nucleus. May be involved in transcriptional regulation. The sequence is that of Zinc finger and BTB domain-containing protein 10 (ZBTB10) from Homo sapiens (Human).